Reading from the N-terminus, the 417-residue chain is Envelope glycoprotein D (417 aa).

Residues 1–18 (MQGPTLAVLGALLAVAVS) form the signal peptide. Residues 19-360 (LPTPAPRVTV…APATPAAPDA (342 aa)) lie on the Virion surface side of the membrane. Asn41 and Asn102 each carry an N-linked (GlcNAc...) asparagine; by host glycan. Intrachain disulfides connect Cys75-Cys197, Cys114-Cys213, and Cys126-Cys135. A disordered region spans residues 259 to 355 (EESKGYEPPP…THPPPAPATP (97 aa)). Acidic residues predominate over residues 279 to 292 (GDDEAREDEGETED). Residues 361–389 (VPVGVGIGIAAAAIACVAAAAAGAYFVYT) form a helical membrane-spanning segment. Over 390–417 (RRRGAGPLPRKPKKLPAFGNVNYSALPG) the chain is Intravirion.

This sequence belongs to the herpesviridae glycoprotein D family.

The protein resides in the virion membrane. Functionally, envelope glycoprotein that binds to host cell entry receptors, promoting the virus entry into host cells. May trigger fusion with host membrane, by recruiting the fusion machinery composed of gB and gH/gL. The protein is Envelope glycoprotein D (gD) of Bovine herpesvirus 1.2 (strain ST) (BoHV-1).